Consider the following 345-residue polypeptide: Microtubule-associated protein Jupiter (345 aa).

Residues 1-14 (MISNFDCTDNQASS) show a composition bias toward polar residues. The disordered stretch occupies residues 1–34 (MISNFDCTDNQASSKVLRPPGGGSSDIFGSEMPQ). A Phosphoserine modification is found at S24. Position 35 is a phosphothreonine (T35). A compositionally biased stretch (basic and acidic residues) spans 78–87 (QKTVDSHNRL). A disordered region spans residues 78–100 (QKTVDSHNRLFGEPTRPITPGKN). T92 and T96 each carry phosphothreonine. Phosphoserine occurs at positions 105, 134, and 145. Disordered stretches follow at residues 127–241 (HYNG…QPHS) and 300–345 (EGNP…SGLW). Residues 132-145 (SGSVSSASSSVSSS) are compositionally biased toward low complexity. The segment covering 146-164 (TENLKMNSGSRSVFRNMST) has biased composition (polar residues). Residues 177-191 (LCPPSPVRIEPPTPP) show a composition bias toward pro residues. Polar residues-rich tracts occupy residues 212–226 (DNSTYTKSDQVNEAC) and 315–326 (DYNQRQESSNAG).

This sequence belongs to the MAP Jupiter family.

The protein resides in the nucleus. It localises to the cytoplasm. Its subcellular location is the cytoskeleton. The protein localises to the spindle. Functionally, binds to all microtubule populations. In Drosophila erecta (Fruit fly), this protein is Microtubule-associated protein Jupiter.